Reading from the N-terminus, the 409-residue chain is Homoserine O-succinyltransferase (409 aa).

In terms of domain architecture, AB hydrolase-1 spans 43–380; that stretch reads NAIVVCHALN…PHGHDAFLLD (338 aa). S149 (nucleophile) is an active-site residue. Residue R219 coordinates substrate. Positions 244–268 are disordered; it reads TLPAARGSLPPEGTDPTRGGPASDR. Active-site residues include D341 and H374. Residue D375 coordinates substrate.

It belongs to the AB hydrolase superfamily. MetX family. As to quaternary structure, homodimer.

Its subcellular location is the cytoplasm. The enzyme catalyses L-homoserine + succinyl-CoA = O-succinyl-L-homoserine + CoA. It participates in amino-acid biosynthesis; L-methionine biosynthesis via de novo pathway; O-succinyl-L-homoserine from L-homoserine: step 1/1. Its function is as follows. Transfers a succinyl group from succinyl-CoA to L-homoserine, forming succinyl-L-homoserine. The polypeptide is Homoserine O-succinyltransferase (Comamonas testosteroni (strain DSM 14576 / KF-1) (Pseudomonas testosteroni)).